A 196-amino-acid polypeptide reads, in one-letter code: Large ribosomal subunit protein uL11m (196 aa).

This sequence belongs to the universal ribosomal protein uL11 family. In terms of assembly, component of the mitochondrial ribosome large subunit (39S) which comprises a 16S rRNA and about 50 distinct proteins.

It is found in the mitochondrion. The chain is Large ribosomal subunit protein uL11m (mRpL11) from Drosophila melanogaster (Fruit fly).